We begin with the raw amino-acid sequence, 747 residues long: ATP-dependent DNA helicase Hel308 (747 aa).

Residues glutamine 29 and 47–54 (VPTASGKT) contribute to the ATP site. Residues 34 to 200 (DAGVADGESL…WLDAELVDSS (167 aa)) form the Helicase ATP-binding domain. The DEAH box signature appears at 145 to 148 (DEVH). Residues 234–434 (PTEAVVRETL…REPSMRTHLL (201 aa)) enclose the Helicase C-terminal domain. The segment at 711-747 (AAGHQQPEMDGVTPDADVKESAAAAGTDDGQANLGDF) is disordered.

It belongs to the helicase family. Hel308 subfamily. In terms of assembly, monomer.

It catalyses the reaction Couples ATP hydrolysis with the unwinding of duplex DNA by translocating in the 3'-5' direction.. The enzyme catalyses ATP + H2O = ADP + phosphate + H(+). DNA-dependent ATPase and 3'-5' DNA helicase that may be involved in repair of stalled replication forks. The protein is ATP-dependent DNA helicase Hel308 of Natronomonas pharaonis (strain ATCC 35678 / DSM 2160 / CIP 103997 / JCM 8858 / NBRC 14720 / NCIMB 2260 / Gabara) (Halobacterium pharaonis).